The following is a 308-amino-acid chain: Aspartate carbamoyltransferase catalytic subunit (308 aa).

The carbamoyl phosphate site is built by Arg-59 and Thr-60. Lys-87 is an L-aspartate binding site. Carbamoyl phosphate contacts are provided by Arg-109, His-139, and Gln-142. Residues Arg-172 and Arg-224 each contribute to the L-aspartate site. Carbamoyl phosphate-binding residues include Ala-265 and Pro-266.

It belongs to the aspartate/ornithine carbamoyltransferase superfamily. ATCase family. As to quaternary structure, heterododecamer (2C3:3R2) of six catalytic PyrB chains organized as two trimers (C3), and six regulatory PyrI chains organized as three dimers (R2).

It catalyses the reaction carbamoyl phosphate + L-aspartate = N-carbamoyl-L-aspartate + phosphate + H(+). The protein operates within pyrimidine metabolism; UMP biosynthesis via de novo pathway; (S)-dihydroorotate from bicarbonate: step 2/3. Its function is as follows. Catalyzes the condensation of carbamoyl phosphate and aspartate to form carbamoyl aspartate and inorganic phosphate, the committed step in the de novo pyrimidine nucleotide biosynthesis pathway. The chain is Aspartate carbamoyltransferase catalytic subunit from Streptococcus mutans serotype c (strain ATCC 700610 / UA159).